The primary structure comprises 771 residues: Probable exo-1,4-beta-xylosidase xlnD (771 aa).

An N-terminal signal peptide occupies residues 1-25 (MARIMSWHYGKAITLFVCLGPVALS). The N-linked (GlcNAc...) asparagine glycan is linked to asparagine 67. Aspartate 293 is an active-site residue. 4 N-linked (GlcNAc...) asparagine glycosylation sites follow: asparagine 305, asparagine 345, asparagine 423, and asparagine 464.

It belongs to the glycosyl hydrolase 3 family.

The protein localises to the secreted. The enzyme catalyses Hydrolysis of (1-&gt;4)-beta-D-xylans, to remove successive D-xylose residues from the non-reducing termini.. It functions in the pathway glycan degradation; xylan degradation. Its function is as follows. Xylan 1,4-beta-xylosidase involved in the hydrolysis of xylan, a major structural heterogeneous polysaccharide found in plant biomass representing the second most abundant polysaccharide in the biosphere, after cellulose. This chain is Probable exo-1,4-beta-xylosidase xlnD (xlnD), found in Neosartorya fischeri (strain ATCC 1020 / DSM 3700 / CBS 544.65 / FGSC A1164 / JCM 1740 / NRRL 181 / WB 181) (Aspergillus fischerianus).